Reading from the N-terminus, the 208-residue chain is Holliday junction branch migration complex subunit RuvA (208 aa).

The segment at 1 to 63 (MIGMLTGRVE…QDSVTLYGFL (63 aa)) is domain I. The interval 64–142 (DRDSKRVFLQ…LNQSDDASAG (79 aa)) is domain II. Positions 143–151 (NAPYQPTVD) are flexible linker. A domain III region spans residues 151 to 208 (DAGVEQVVEGLVSLGWRQQDAQRAVNEACAENDVPMPLASDDAPRVLRLALARMDRGR).

The protein belongs to the RuvA family. In terms of assembly, homotetramer. Forms an RuvA(8)-RuvB(12)-Holliday junction (HJ) complex. HJ DNA is sandwiched between 2 RuvA tetramers; dsDNA enters through RuvA and exits via RuvB. An RuvB hexamer assembles on each DNA strand where it exits the tetramer. Each RuvB hexamer is contacted by two RuvA subunits (via domain III) on 2 adjacent RuvB subunits; this complex drives branch migration. In the full resolvosome a probable DNA-RuvA(4)-RuvB(12)-RuvC(2) complex forms which resolves the HJ.

It is found in the cytoplasm. In terms of biological role, the RuvA-RuvB-RuvC complex processes Holliday junction (HJ) DNA during genetic recombination and DNA repair, while the RuvA-RuvB complex plays an important role in the rescue of blocked DNA replication forks via replication fork reversal (RFR). RuvA specifically binds to HJ cruciform DNA, conferring on it an open structure. The RuvB hexamer acts as an ATP-dependent pump, pulling dsDNA into and through the RuvAB complex. HJ branch migration allows RuvC to scan DNA until it finds its consensus sequence, where it cleaves and resolves the cruciform DNA. The polypeptide is Holliday junction branch migration complex subunit RuvA (Bifidobacterium longum subsp. infantis (strain ATCC 15697 / DSM 20088 / JCM 1222 / NCTC 11817 / S12)).